The chain runs to 164 residues: ATP synthase B' chain, cyanelle (164 aa).

A helical transmembrane segment spans residues A26–F46.

The protein belongs to the ATPase B chain family. In terms of assembly, F-type ATPases have 2 components, F(1) - the catalytic core - and F(0) - the membrane proton channel. F(1) has five subunits: alpha(3), beta(3), gamma(1), delta(1), epsilon(1). F(0) has four main subunits: a(1), b(1), b'(1) and c(10-14). The alpha and beta chains form an alternating ring which encloses part of the gamma chain. F(1) is attached to F(0) by a central stalk formed by the gamma and epsilon chains, while a peripheral stalk is formed by the delta, b and b' chains.

It is found in the plastid. Its subcellular location is the cyanelle thylakoid membrane. Its function is as follows. F(1)F(0) ATP synthase produces ATP from ADP in the presence of a proton or sodium gradient. F-type ATPases consist of two structural domains, F(1) containing the extramembraneous catalytic core and F(0) containing the membrane proton channel, linked together by a central stalk and a peripheral stalk. During catalysis, ATP synthesis in the catalytic domain of F(1) is coupled via a rotary mechanism of the central stalk subunits to proton translocation. Component of the F(0) channel, it forms part of the peripheral stalk, linking F(1) to F(0). The b'-subunit is a diverged and duplicated form of b found in plants and photosynthetic bacteria. The protein is ATP synthase B' chain, cyanelle of Cyanophora paradoxa.